The primary structure comprises 429 residues: C4-dicarboxylate transport protein (429 aa).

A run of 8 helical transmembrane segments spans residues 3 to 23 (VSIFKTLYFQVLTAITIGVLL), 44 to 64 (LIKMIIAPVIFCTVVTGIAGM), 76 to 96 (IALLYFEIVSTLALLIGLVVV), 144 to 164 (AFASGNILQVLLFAVLFGFAL), 184 to 204 (VIFGVINMIMRLAPLGAFGAM), 222 to 242 (LILCFYLTCILFVVLVLGTIA), 331 to 351 (TLLVVLLLSSKGAAGVTGSGF), and 352 to 372 (IVLAATISAVGHLPLAGLALI).

This sequence belongs to the dicarboxylate/amino acid:cation symporter (DAACS) (TC 2.A.23) family.

The protein localises to the cell inner membrane. Its function is as follows. Responsible for the transport of dicarboxylates such as succinate, fumarate, and malate from the periplasm across the membrane. The protein is C4-dicarboxylate transport protein of Yersinia pestis bv. Antiqua (strain Antiqua).